A 200-amino-acid chain; its full sequence is Phosphatidylethanolamine N-methyltransferase B (200 aa).

Residues 1 to 8 (MEKGLSSD) lie on the Lumenal side of the membrane. The helical intramembrane region spans 9-29 (LIIAFVAIVLHVVNYNVTAQF). The Lumenal portion of the chain corresponds to 30-39 (EYKTRYFTKL). A helical transmembrane segment spans residues 40–58 (IGRNAIYYYAVFLIISALI). Residues 59–86 (RDHFINVAVLSDKDSIILFPTEIANMIG) lie on the Cytoplasmic side of the membrane. A helical membrane pass occupies residues 87 to 107 (DSCFIFGILLNIWTLKALGIK). 91-93 (IFG) is a binding site for S-adenosyl-L-methionine. The Lumenal portion of the chain corresponds to 108 to 150 (GMYNGDSFGHIMDSPVTGGPYQFFSDPQYVGTTIAALGVAIRN). A helical membrane pass occupies residues 151–171 (QSIYGFLCTILVGVVFYISAT). Residues 172–200 (FVETPHLKNIYSNRSYSKINFKNLKSLKN) lie on the Cytoplasmic side of the membrane. An S-adenosyl-L-methionine-binding site is contributed by 174–175 (ET).

This sequence belongs to the class VI-like SAM-binding methyltransferase superfamily. PEMT/PEM2 methyltransferase family.

Its subcellular location is the endoplasmic reticulum membrane. It is found in the mitochondrion membrane. It carries out the reaction a 1,2-diacyl-sn-glycero-3-phospho-N-methylethanolamine + S-adenosyl-L-methionine = a 1,2-diacyl-sn-glycero-3-phospho-N,N-dimethylethanolamine + S-adenosyl-L-homocysteine + H(+). The enzyme catalyses a 1,2-diacyl-sn-glycero-3-phospho-N,N-dimethylethanolamine + S-adenosyl-L-methionine = a 1,2-diacyl-sn-glycero-3-phosphocholine + S-adenosyl-L-homocysteine + H(+). It catalyses the reaction a 1,2-diacyl-sn-glycero-3-phosphoethanolamine + S-adenosyl-L-methionine = a 1,2-diacyl-sn-glycero-3-phospho-N-methylethanolamine + S-adenosyl-L-homocysteine + H(+). The protein operates within phospholipid metabolism; phosphatidylcholine biosynthesis. In terms of biological role, catalyzes the three sequential steps of the methylation pathway of phosphatidylcholine biosynthesis, the SAM-dependent methylation of phosphatidylethanolamine (PE) to phosphatidylmonomethylethanolamine (PMME), PMME to phosphatidyldimethylethanolamine (PDME), and PDME to phosphatidylcholine (PC). This chain is Phosphatidylethanolamine N-methyltransferase B (pemtB), found in Dictyostelium discoideum (Social amoeba).